The chain runs to 232 residues: UPF0173 metal-dependent hydrolase Msil_0741 (232 aa).

It belongs to the UPF0173 family.

This Methylocella silvestris (strain DSM 15510 / CIP 108128 / LMG 27833 / NCIMB 13906 / BL2) protein is UPF0173 metal-dependent hydrolase Msil_0741.